The primary structure comprises 61 residues: Small ribosomal subunit protein uS14 (61 aa).

Residues Cys-24, Cys-27, Cys-40, and Cys-43 each coordinate Zn(2+).

Belongs to the universal ribosomal protein uS14 family. Zinc-binding uS14 subfamily. Part of the 30S ribosomal subunit. Contacts proteins S3 and S10. It depends on Zn(2+) as a cofactor.

Its function is as follows. Binds 16S rRNA, required for the assembly of 30S particles and may also be responsible for determining the conformation of the 16S rRNA at the A site. The protein is Small ribosomal subunit protein uS14 of Kosmotoga olearia (strain ATCC BAA-1733 / DSM 21960 / TBF 19.5.1).